Here is a 406-residue protein sequence, read N- to C-terminus: Multifunctional CCA protein (406 aa).

2 residues coordinate ATP: G8 and R11. Residues G8 and R11 each contribute to the CTP site. D21 and D23 together coordinate Mg(2+). Residues R91, R138, and R141 each coordinate ATP. CTP is bound by residues R91, R138, and R141. The region spanning 229–331 (TGIHQEMVSD…LELLGRCDAL (103 aa)) is the HD domain.

Belongs to the tRNA nucleotidyltransferase/poly(A) polymerase family. Bacterial CCA-adding enzyme type 1 subfamily. Monomer. Can also form homodimers and oligomers. It depends on Mg(2+) as a cofactor. Requires Ni(2+) as cofactor.

The enzyme catalyses a tRNA precursor + 2 CTP + ATP = a tRNA with a 3' CCA end + 3 diphosphate. It carries out the reaction a tRNA with a 3' CCA end + 2 CTP + ATP = a tRNA with a 3' CCACCA end + 3 diphosphate. Catalyzes the addition and repair of the essential 3'-terminal CCA sequence in tRNAs without using a nucleic acid template. Adds these three nucleotides in the order of C, C, and A to the tRNA nucleotide-73, using CTP and ATP as substrates and producing inorganic pyrophosphate. tRNA 3'-terminal CCA addition is required both for tRNA processing and repair. Also involved in tRNA surveillance by mediating tandem CCA addition to generate a CCACCA at the 3' terminus of unstable tRNAs. While stable tRNAs receive only 3'-terminal CCA, unstable tRNAs are marked with CCACCA and rapidly degraded. This Stenotrophomonas maltophilia (strain R551-3) protein is Multifunctional CCA protein.